The primary structure comprises 613 residues: Proteasome-associated ATPase (613 aa).

The segment at 1-29 (MSESERSEGFPEGFAGAGSGSLSSEDAAE) is disordered. A coiled-coil region spans residues 23 to 100 (SSEDAAELEA…LREEVDRLGQ (78 aa)). 300–305 (GCGKTL) serves as a coordination point for ATP. Residue K595 forms an Isoglutamyl lysine isopeptide (Lys-Gln) (interchain with Q-Cter in protein Pup) linkage. The segment at 612 to 613 (YL) is docks into pockets in the proteasome alpha-ring.

The protein belongs to the AAA ATPase family. Homohexamer. Assembles into a hexameric ring structure that caps the 20S proteasome core. Strongly interacts with the prokaryotic ubiquitin-like protein Pup through a hydrophobic interface; the interacting region of ARC lies in its N-terminal coiled-coil domain. There is one Pup binding site per ARC hexamer ring. Upon ATP-binding, the C-terminus of ARC interacts with the alpha-rings of the proteasome core, possibly by binding to the intersubunit pockets.

It functions in the pathway protein degradation; proteasomal Pup-dependent pathway. ATPase which is responsible for recognizing, binding, unfolding and translocation of pupylated proteins into the bacterial 20S proteasome core particle. May be essential for opening the gate of the 20S proteasome via an interaction with its C-terminus, thereby allowing substrate entry and access to the site of proteolysis. Thus, the C-termini of the proteasomal ATPase may function like a 'key in a lock' to induce gate opening and therefore regulate proteolysis. This chain is Proteasome-associated ATPase, found in Mycolicibacterium smegmatis (strain ATCC 700084 / mc(2)155) (Mycobacterium smegmatis).